The primary structure comprises 698 residues: MARTTPIERYRNIGIVAHVDAGKTTTTERVLFYTGLSHKIGEVHDGAATTDWMVQEQERGITITSAAVTTFWRGMDAQFTEHRINIIDTPGHVDFTIEVERSLRVLDGAVVVFCGSSGVEPQSETVWRQADKYRVPRMVFVNKMDRAGANFDRVVDQIRTRLGATCVPIQMNIGAEEEFKGVIDLIKMKAINWSEEDQGMTFSYEEIPAHLAAKAAEMHEYLVEAAAEASEELMDKYLETGNLSELEIKQALRQRTIDNEIVLATCGSAFKNKGVQAVLDAVVDYLPAPIDVPAIKGIDEHDAEVERPSDDNAPFAALAFKIATDPFVGTLTFIRVYSGVLQSGSGVYNSVKEKRERVGRIVQMHANDRTELKEVRAGDIAAAIGLKDVTTGDTLCDNDHRVILERMEFPEPVITIAVEPRSQADQDKMAIALQKLAAEDPSFRVETDEDSAQTLISGMGELHLDIIVDRMRREFGVECNVGKPQVSYRETIRSTVEVEGKFVRQSGGRGQFGHVWLRLEPLEEGAGYEFVNEVVGGVIPREYIPAVDKGIQEQMKNGVLASFPVLDVKVTLFDGSYHDVDSNEMAFKIAGSMGFKKGALLANPSLLEPCMKVEVTTPADYMGDVVGDLNRRRGLIDGMDDGIGGVKLIHAVVPLAEMFGYATDLRSATQGRASYSMEFLKYSDAPQNIAKAIIESRS.

The region spanning 8 to 290 (ERYRNIGIVA…AVVDYLPAPI (283 aa)) is the tr-type G domain. Residues 17–24 (AHVDAGKT), 88–92 (DTPGH), and 142–145 (NKMD) contribute to the GTP site.

It belongs to the TRAFAC class translation factor GTPase superfamily. Classic translation factor GTPase family. EF-G/EF-2 subfamily.

The protein localises to the cytoplasm. Its function is as follows. Catalyzes the GTP-dependent ribosomal translocation step during translation elongation. During this step, the ribosome changes from the pre-translocational (PRE) to the post-translocational (POST) state as the newly formed A-site-bound peptidyl-tRNA and P-site-bound deacylated tRNA move to the P and E sites, respectively. Catalyzes the coordinated movement of the two tRNA molecules, the mRNA and conformational changes in the ribosome. The protein is Elongation factor G 1 of Shewanella denitrificans (strain OS217 / ATCC BAA-1090 / DSM 15013).